An 80-amino-acid polypeptide reads, in one-letter code: MQTAYWVMVMMMVWITAPLSEGGKLNDVIRGLVPDDVTPQLILRSLISRRPSDSVVRSTVHICYWKVCPPPPWRRPNGKG.

The N-terminal stretch at 1-22 (MQTAYWVMVMMMVWITAPLSEG) is a signal peptide. Positions 23-57 (GKLNDVIRGLVPDDVTPQLILRSLISRRPSDSVVR) are excised as a propeptide. Cysteines 63 and 68 form a disulfide. D-tryptophan is present on Trp-65. Residues Pro-69, Pro-70, Pro-71, and Pro-72 each carry the 4-hydroxyproline modification. The propeptide occupies 74 to 80 (RRPNGKG).

This sequence belongs to the conotoxin C superfamily. Consomatin family. As to expression, expressed by the venom duct.

The protein localises to the secreted. Functionally, moderately activates human somatostatin receptors (SSTR) with a preferential activation of SSTR1 and SSTR4. In vivo, does not cause behavioral changes in mice within a few minutes of intracranial injection, but causes a progressive loss of movement thereafter. Four to five hours after injection, mice recover, even with the highest dose tested. Shows antinociception and antihyperalgesia activities in two mouse models of acute pain, most probably by acting outside the central nervous system. The sequence is that of Consomatin Mrc1 from Conus mercator (Trader cone).